The chain runs to 363 residues: tRNA-specific 2-thiouridylase MnmA (363 aa).

ATP-binding positions include 13–20 and M39; that span reads GLSGGVDS. Positions 99–101 are interaction with target base in tRNA; it reads NPD. Catalysis depends on C104, which acts as the Nucleophile. The cysteines at positions 104 and 200 are disulfide-linked. G128 lines the ATP pocket. Residues 150 to 152 are interaction with tRNA; the sequence is KDQ. Residue C200 is the Cysteine persulfide intermediate of the active site. Residues 310–311 are interaction with tRNA; the sequence is RY.

This sequence belongs to the MnmA/TRMU family.

It is found in the cytoplasm. The enzyme catalyses S-sulfanyl-L-cysteinyl-[protein] + uridine(34) in tRNA + AH2 + ATP = 2-thiouridine(34) in tRNA + L-cysteinyl-[protein] + A + AMP + diphosphate + H(+). In terms of biological role, catalyzes the 2-thiolation of uridine at the wobble position (U34) of tRNA, leading to the formation of s(2)U34. The sequence is that of tRNA-specific 2-thiouridylase MnmA from Ruthia magnifica subsp. Calyptogena magnifica.